The following is a 283-amino-acid chain: Polyamine aminopropyltransferase (283 aa).

The region spanning 2–238 (ELWYTEEWTE…GHWLFGFASK (237 aa)) is the PABS domain. Glutamine 31 provides a ligand contact to S-methyl-5'-thioadenosine. The spermidine site is built by histidine 62 and aspartate 86. S-methyl-5'-thioadenosine is bound by residues glutamate 106 and 137-138 (DG). The active-site Proton acceptor is aspartate 156. Spermidine is bound at residue 156–159 (DSTD). Proline 163 contributes to the S-methyl-5'-thioadenosine binding site.

Belongs to the spermidine/spermine synthase family. Homodimer or homotetramer.

It localises to the cytoplasm. It catalyses the reaction S-adenosyl 3-(methylsulfanyl)propylamine + putrescine = S-methyl-5'-thioadenosine + spermidine + H(+). Its pathway is amine and polyamine biosynthesis; spermidine biosynthesis; spermidine from putrescine: step 1/1. Catalyzes the irreversible transfer of a propylamine group from the amino donor S-adenosylmethioninamine (decarboxy-AdoMet) to putrescine (1,4-diaminobutane) to yield spermidine. The sequence is that of Polyamine aminopropyltransferase from Clostridioides difficile (strain 630) (Peptoclostridium difficile).